The following is a 1053-amino-acid chain: Mediator of RNA polymerase II transcription subunit 16 (1053 aa).

A disordered region spans residues 139–170; sequence KTEGNTEKNKDTKQIGNGSGTNGHGDSPINTP. The span at 142–151 shows a compositional bias: basic and acidic residues; it reads GNTEKNKDTK.

The protein belongs to the Mediator complex subunit 16 family. Component of the Mediator complex.

The protein resides in the nucleus. In terms of biological role, component of the Mediator complex, a coactivator involved in the regulated transcription of nearly all RNA polymerase II-dependent genes. Mediator functions as a bridge to convey information from gene-specific regulatory proteins to the basal RNA polymerase II transcription machinery. Mediator is recruited to promoters by direct interactions with regulatory proteins and serves as a scaffold for the assembly of a functional preinitiation complex with RNA polymerase II and the general transcription factors. This Candida albicans (strain SC5314 / ATCC MYA-2876) (Yeast) protein is Mediator of RNA polymerase II transcription subunit 16 (SIN4).